The primary structure comprises 506 residues: Maturase K (506 aa).

It belongs to the intron maturase 2 family. MatK subfamily.

It is found in the plastid. It localises to the chloroplast. Its function is as follows. Usually encoded in the trnK tRNA gene intron. Probably assists in splicing its own and other chloroplast group II introns. The polypeptide is Maturase K (Cytisus scoparius (Scotch broom)).